The primary structure comprises 335 residues: Pyridoxal 5'-phosphate synthase subunit PdxS (335 aa).

Asp-30 provides a ligand contact to D-ribose 5-phosphate. The Schiff-base intermediate with D-ribose 5-phosphate role is filled by Lys-87. Gly-159 is a D-ribose 5-phosphate binding site. A D-glyceraldehyde 3-phosphate-binding site is contributed by Arg-171. D-ribose 5-phosphate-binding positions include Gly-257 and 278–279 (GS).

The protein belongs to the PdxS/SNZ family. In the presence of PdxT, forms a dodecamer of heterodimers.

It carries out the reaction aldehydo-D-ribose 5-phosphate + D-glyceraldehyde 3-phosphate + L-glutamine = pyridoxal 5'-phosphate + L-glutamate + phosphate + 3 H2O + H(+). Its pathway is cofactor biosynthesis; pyridoxal 5'-phosphate biosynthesis. Catalyzes the formation of pyridoxal 5'-phosphate from ribose 5-phosphate (RBP), glyceraldehyde 3-phosphate (G3P) and ammonia. The ammonia is provided by the PdxT subunit. Can also use ribulose 5-phosphate and dihydroxyacetone phosphate as substrates, resulting from enzyme-catalyzed isomerization of RBP and G3P, respectively. The protein is Pyridoxal 5'-phosphate synthase subunit PdxS of Thermococcus kodakarensis (strain ATCC BAA-918 / JCM 12380 / KOD1) (Pyrococcus kodakaraensis (strain KOD1)).